The sequence spans 577 residues: Protein NRT1/ PTR FAMILY 6.2 (577 aa).

A run of 12 helical transmembrane segments spans residues 28-48 (WITA…TMGI), 74-94 (FMGT…SFLG), 96-116 (FKTI…LAVA), 134-154 (IPAT…IALG), 183-203 (FFFN…VTVL), 214-234 (WAYG…LCGT), 332-352 (LLPI…MITF), 369-389 (IPAG…LAVY), 409-429 (LQRI…AALV), 447-467 (ISVF…AFIY), 488-508 (GLFL…VSIV), and 535-555 (WLLV…ALWF).

It belongs to the major facilitator superfamily. Proton-dependent oligopeptide transporter (POT/PTR) (TC 2.A.17) family. As to expression, expressed in shoots, leaves, flowers and siliques. Expressed in leaf petiole.

Its subcellular location is the membrane. In terms of biological role, low-affinity proton-dependent nitrate transporter. Not involved in dipeptides transport. This Arabidopsis thaliana (Mouse-ear cress) protein is Protein NRT1/ PTR FAMILY 6.2 (NPF6.2).